Reading from the N-terminus, the 40-residue chain is Photosystem II reaction center protein J (40 aa).

A helical membrane pass occupies residues 8–28 (IPLWLIGTIAGILVIGLVGIF).

The protein belongs to the PsbJ family. PSII is composed of 1 copy each of membrane proteins PsbA, PsbB, PsbC, PsbD, PsbE, PsbF, PsbH, PsbI, PsbJ, PsbK, PsbL, PsbM, PsbT, PsbX, PsbY, PsbZ, Psb30/Ycf12, at least 3 peripheral proteins of the oxygen-evolving complex and a large number of cofactors. It forms dimeric complexes.

It is found in the plastid. The protein resides in the chloroplast thylakoid membrane. Functionally, one of the components of the core complex of photosystem II (PSII). PSII is a light-driven water:plastoquinone oxidoreductase that uses light energy to abstract electrons from H(2)O, generating O(2) and a proton gradient subsequently used for ATP formation. It consists of a core antenna complex that captures photons, and an electron transfer chain that converts photonic excitation into a charge separation. This chain is Photosystem II reaction center protein J, found in Anthoceros angustus (Hornwort).